We begin with the raw amino-acid sequence, 527 residues long: Abrin-b (527 aa).

Gln-1 is modified (pyrrolidone carboxylic acid). Asn-110 carries N-linked (GlcNAc...) asparagine glycosylation. Glu-163 is an active-site residue. Intrachain disulfides connect Cys-246-Cys-268, Cys-285-Cys-304, and Cys-328-Cys-345. The region spanning 272-399 (YEPTVRIGGR…YLMRQGWRTG (128 aa)) is the Ricin B-type lectin 1 domain. The 1-alpha repeat unit spans residues 282–324 (NGMCVDVYDDGYHNGNRIIAWKCKDRLEENQLWTLKSDKTIRS). The 1-beta repeat unit spans residues 325–365 (NGKCLTTEGYAPGNYVMIYDCTSAVAEATYWEIWDNGTIIN). N-linked (GlcNAc...) asparagine glycosylation is found at Asn-360 and Asn-400. A 1-gamma repeat occupies 368-400 (SALVLSAESSSMGGTLTVQTNEYLMRQGWRTGN). The Ricin B-type lectin 2 domain occupies 402–526 (TSPFVTSISG…GKPNQIWLTL (125 aa)). A 2-alpha repeat occupies 413 to 448 (SDLCMQAQGSNVWLAYCDNNKKEQQWALYTDGSIRS). Cystine bridges form between Cys-416-Cys-429 and Cys-455-Cys-472. One copy of the 2-beta repeat lies at 452 to 491 (TNNCLTSKDHKQGSPIVLMACSNGWASQRWLFRNDGSIYN). One copy of the 2-gamma repeat lies at 494 to 527 (DDMVMDVKRSDPSLKEIILHPYHGKPNQIWLTLF).

This sequence in the N-terminal section; belongs to the ribosome-inactivating protein family. Type 2 RIP subfamily. As to quaternary structure, disulfide-linked dimer of A and B chains.

The catalysed reaction is Endohydrolysis of the N-glycosidic bond at one specific adenosine on the 28S rRNA.. In terms of biological role, the A chain is responsible for inhibiting protein synthesis through the catalytic inactivation of 60S ribosomal subunits by removing adenine from position 4,324 of 28S rRNA. Abrin-a is more toxic than ricin. Functionally, the B chain is a galactose-specific lectin that facilitates the binding of abrin to the cell membrane that precedes endocytosis. In Abrus precatorius (Indian licorice), this protein is Abrin-b.